A 130-amino-acid polypeptide reads, in one-letter code: Large ribosomal subunit protein bL17 (130 aa).

The protein belongs to the bacterial ribosomal protein bL17 family. In terms of assembly, part of the 50S ribosomal subunit. Contacts protein L32.

The polypeptide is Large ribosomal subunit protein bL17 (Photorhabdus laumondii subsp. laumondii (strain DSM 15139 / CIP 105565 / TT01) (Photorhabdus luminescens subsp. laumondii)).